Reading from the N-terminus, the 1249-residue chain is MAGE-like protein 2 (1249 aa).

Over residues 1–10 (MSQLSKNLGD) the composition is skewed to polar residues. 10 disordered regions span residues 1–50 (MSQL…PPID), 134–233 (APGA…AQPP), 300–327 (QPPASGAPMAQPAAPPAQPMAPPAQPMA), 349–378 (PQVPQGPQAPPAQLATPPGWQATSPGWQAT), 410–433 (RQGPPPIRPGPPPIRPGPPPVRQA), 515–569 (QALP…LPAP), 647–679 (QPFQGAPPSQKAVQIQLPPQQAQASGPQAEVPT), 714–746 (LMTPSGECRASSIDRRGSSKERRTSSKERRAPS), 862–910 (PQAT…DWQG), and 930–957 (VSGDWEHPNTPRGLSGWEGPSTSRILSG). 2 stretches are compositionally biased toward pro residues: residues 40-49 (PPVPWDPPPI) and 140-233 (AHPP…AQPP). Low complexity predominate over residues 301–311 (PPASGAPMAQP). Pro residues-rich tracts occupy residues 312 to 324 (AAPPAQPMAPPAQ) and 349 to 358 (PQVPQGPQAP). Over residues 369 to 378 (QATSPGWQAT) the composition is skewed to polar residues. A compositionally biased stretch (pro residues) spans 410-432 (RQGPPPIRPGPPPIRPGPPPVRQ). A compositionally biased stretch (low complexity) spans 525–552 (QAPQARLPAPQVQAAPQVPTAPPATQVP). The span at 553-567 (AAPPAGPQVPQPVLP) shows a compositional bias: pro residues. The segment covering 662–675 (QLPPQQAQASGPQA) has biased composition (low complexity). Over residues 725–746 (SIDRRGSSKERRTSSKERRAPS) the composition is skewed to basic and acidic residues. Over residues 862-871 (PQATATTQEA) the composition is skewed to low complexity. The segment covering 881–891 (RSGKATRKKKH) has biased composition (basic residues). Residues 1020–1219 (LDERANALVQ…QSWPFHYLEA (200 aa)) form the MAGE domain. Residues 1226–1235 (EDTDEDEPDT) show a composition bias toward acidic residues. The interval 1226–1249 (EDTDEDEPDTGDSAHGPTSRPPPR) is disordered.

As to quaternary structure, part of a complex consisting of MAGEL2, TRIM27 and USP7; directly interacts with USP7. Interacts with TRIM27. Interacts with VPS35; leading to recruitment at retromer-containing endosomes. Interacts with BMAL1 and PER2. In terms of tissue distribution, expressed in placenta, fetal and adult brain. Not detected in heart and small intestine, very low levels in fibroblasts. Not expressed in brain of a Prader-Willi patient.

Its subcellular location is the early endosome. The protein localises to the cytoplasm. It localises to the nucleus. Functionally, probably enhances ubiquitin ligase activity of RING-type zinc finger-containing E3 ubiquitin-protein ligases, possibly through recruitment and/or stabilization of the Ubl-conjugating enzyme (E2) at the E3:substrate complex. Acts as a regulator of retrograde transport via its interaction with VPS35. Recruited to retromer-containing endosomes and promotes the formation of 'Lys-63'-linked polyubiquitin chains at 'Lys-220' of WASHC1 together with TRIM27, leading to promote endosomal F-actin assembly. Regulates the circadian clock by repressing the transcriptional activator activity of the CLOCK-BMAL1 heterodimer. Significantly promotes the cytoplasmic accumulation of CLOCK. This Homo sapiens (Human) protein is MAGE-like protein 2 (MAGEL2).